The primary structure comprises 150 residues: Azurin (150 aa).

The first 21 residues, 1-21, serve as a signal peptide directing secretion; the sequence is MFKQVLGGMALMAAFSAPVLA. Residues 22–150 form the Plastocyanin-like domain; it reads AECSVDIAGT…LMKGTLKLVD (129 aa). Cys24 and Cys47 form a disulfide bridge. 4 residues coordinate Cu cation: His67, Cys133, His138, and Met142.

It localises to the periplasm. This chain is Azurin, found in Bordetella bronchiseptica (strain ATCC BAA-588 / NCTC 13252 / RB50) (Alcaligenes bronchisepticus).